The sequence spans 264 residues: Indole-3-glycerol phosphate synthase (264 aa).

The protein belongs to the TrpC family.

It catalyses the reaction 1-(2-carboxyphenylamino)-1-deoxy-D-ribulose 5-phosphate + H(+) = (1S,2R)-1-C-(indol-3-yl)glycerol 3-phosphate + CO2 + H2O. It functions in the pathway amino-acid biosynthesis; L-tryptophan biosynthesis; L-tryptophan from chorismate: step 4/5. The sequence is that of Indole-3-glycerol phosphate synthase from Xylella fastidiosa (strain 9a5c).